The primary structure comprises 156 residues: tRNA (cytidine(34)-2'-O)-methyltransferase (156 aa).

S-adenosyl-L-methionine contacts are provided by glycine 102, leucine 124, and serine 132.

This sequence belongs to the class IV-like SAM-binding methyltransferase superfamily. RNA methyltransferase TrmH family. TrmL subfamily. In terms of assembly, homodimer.

Its subcellular location is the cytoplasm. The enzyme catalyses cytidine(34) in tRNA + S-adenosyl-L-methionine = 2'-O-methylcytidine(34) in tRNA + S-adenosyl-L-homocysteine + H(+). It catalyses the reaction 5-carboxymethylaminomethyluridine(34) in tRNA(Leu) + S-adenosyl-L-methionine = 5-carboxymethylaminomethyl-2'-O-methyluridine(34) in tRNA(Leu) + S-adenosyl-L-homocysteine + H(+). In terms of biological role, methylates the ribose at the nucleotide 34 wobble position in the two leucyl isoacceptors tRNA(Leu)(CmAA) and tRNA(Leu)(cmnm5UmAA). Catalyzes the methyl transfer from S-adenosyl-L-methionine to the 2'-OH of the wobble nucleotide. In Burkholderia pseudomallei (strain 1106a), this protein is tRNA (cytidine(34)-2'-O)-methyltransferase.